Reading from the N-terminus, the 324-residue chain is 4-hydroxy-2-oxoglutarate aldolase, mitochondrial (324 aa).

The N-terminal 22 residues, 1 to 22 (MFAHRSFSLLCRRSAVTSWRSQ), are a transit peptide targeting the mitochondrion. 74-75 (SN) is a binding site for substrate. Lys-193 acts as the Schiff-base intermediate with substrate in catalysis. The substrate site is built by Ser-195 and Gly-219.

This sequence belongs to the DapA family. In terms of assembly, homotetramer.

Its subcellular location is the mitochondrion. The catalysed reaction is (4S)-4-hydroxy-2-oxoglutarate = glyoxylate + pyruvate. The enzyme catalyses (4R)-4-hydroxy-2-oxoglutarate = glyoxylate + pyruvate. Inhibited by divalent cations. In terms of biological role, catalyzes the final step in the metabolic pathway of hydroxyproline. This is 4-hydroxy-2-oxoglutarate aldolase, mitochondrial from Danio rerio (Zebrafish).